The primary structure comprises 194 residues: Phosphoheptose isomerase (194 aa).

Residues 31–186 (ICQRFQAGNK…CEQVESRLFA (156 aa)) enclose the SIS domain. 46 to 48 (NGG) serves as a coordination point for substrate. Zn(2+) contacts are provided by histidine 55 and glutamate 59. Substrate contacts are provided by residues glutamate 59, 88-89 (ND), 114-116 (STS), serine 119, and glutamine 166. Glutamine 166 and histidine 174 together coordinate Zn(2+).

This sequence belongs to the SIS family. GmhA subfamily. The cofactor is Zn(2+).

Its subcellular location is the cytoplasm. The enzyme catalyses 2 D-sedoheptulose 7-phosphate = D-glycero-alpha-D-manno-heptose 7-phosphate + D-glycero-beta-D-manno-heptose 7-phosphate. It functions in the pathway carbohydrate biosynthesis; D-glycero-D-manno-heptose 7-phosphate biosynthesis; D-glycero-alpha-D-manno-heptose 7-phosphate and D-glycero-beta-D-manno-heptose 7-phosphate from sedoheptulose 7-phosphate: step 1/1. Its function is as follows. Catalyzes the isomerization of sedoheptulose 7-phosphate in D-glycero-D-manno-heptose 7-phosphate. This is Phosphoheptose isomerase from Synechocystis sp. (strain ATCC 27184 / PCC 6803 / Kazusa).